A 546-amino-acid chain; its full sequence is CCA tRNA nucleotidyltransferase, mitochondrial (546 aa).

It belongs to the tRNA nucleotidyltransferase/poly(A) polymerase family.

It is found in the mitochondrion. The protein localises to the cytoplasm. The protein resides in the nucleus. The catalysed reaction is a tRNA precursor + 2 CTP + ATP = a tRNA with a 3' CCA end + 3 diphosphate. Functionally, nucleotidyltransferase that catalyzes the addition and repair of the essential 3'-terminal CCA sequence in tRNAs, which is necessary for the attachment of amino acids to the 3' terminus of tRNA molecules, using CTP and ATP as substrates. tRNA 3'-terminal CCA addition is required both for tRNA processing and repair. Also involved in tRNA surveillance by mediating tandem CCA addition to generate a CCACCA at the 3' terminus of unstable tRNAs. While stable tRNAs receive only 3'-terminal CCA, unstable tRNAs are marked with CCACCA and rapidly degraded. The structural flexibility of RNA controls the choice between CCA versus CCACCA addition: following the first CCA addition cycle, nucleotide-binding to the active site triggers a clockwise screw motion, producing torque on the RNA. This ejects stable RNAs, whereas unstable RNAs are refolded while bound to the enzyme and subjected to a second CCA catalytic cycle. In Saccharomyces cerevisiae (strain ATCC 204508 / S288c) (Baker's yeast), this protein is CCA tRNA nucleotidyltransferase, mitochondrial (CCA1).